Consider the following 447-residue polypeptide: D-ribitol-5-phosphate cytidylyltransferase (447 aa).

Belongs to the IspD/TarI cytidylyltransferase family. IspD subfamily. As to quaternary structure, homodimer.

The protein localises to the cytoplasm. It localises to the cytosol. The catalysed reaction is D-ribitol 5-phosphate + CTP + H(+) = CDP-L-ribitol + diphosphate. The enzyme catalyses D-ribose 5-phosphate + CTP + H(+) = CDP-D-ribose + diphosphate. It catalyses the reaction D-ribulose 5-phosphate + CTP + H(+) = CDP-D-ribulose + diphosphate. The protein operates within protein modification; protein glycosylation. Cytidylyltransferase required for protein O-linked mannosylation. Catalyzes the formation of CDP-ribitol nucleotide sugar from D-ribitol 5-phosphate. CDP-ribitol is a substrate of FKTN during the biosynthesis of the phosphorylated O-mannosyl trisaccharide (N-acetylgalactosamine-beta-3-N-acetylglucosamine-beta-4-(phosphate-6-)mannose), a carbohydrate structure present in alpha-dystroglycan (DAG1), which is required for binding laminin G-like domain-containing extracellular proteins with high affinity. Shows activity toward other pentose phosphate sugars and mediates formation of CDP-ribulose or CDP-ribose using CTP and ribulose-5-phosphate or ribose-5-phosphate, respectively. Not involved in dolichol production. The chain is D-ribitol-5-phosphate cytidylyltransferase (Crppa) from Rattus norvegicus (Rat).